The sequence spans 272 residues: Putative phosphatase HI_0597 (272 aa).

The active-site Nucleophile is aspartate 11. Aspartate 11 is a binding site for Mg(2+). Leucine 12 contacts phosphate. Residue aspartate 13 coordinates Mg(2+). Phosphate-binding positions include 45–46 and lysine 195; that span reads TG. Residue aspartate 218 participates in Mg(2+) binding. Asparagine 221 contacts phosphate.

It belongs to the HAD-like hydrolase superfamily. Cof family. It depends on Mg(2+) as a cofactor.

The polypeptide is Putative phosphatase HI_0597 (Haemophilus influenzae (strain ATCC 51907 / DSM 11121 / KW20 / Rd)).